Consider the following 254-residue polypeptide: Zinc import ATP-binding protein ZnuC (254 aa).

One can recognise an ABC transporter domain in the interval 5–219 (VELKEVCLSF…PEFARLFGRP (215 aa)). 37–44 (GPNGAGKS) is an ATP binding site. Residues 233-242 (CDGEHHHHEP) are compositionally biased toward basic and acidic residues. The interval 233–254 (CDGEHHHHEPQVPVIRLPSRNQ) is disordered.

This sequence belongs to the ABC transporter superfamily. Zinc importer (TC 3.A.1.15.5) family. As to quaternary structure, the complex is composed of two ATP-binding proteins (ZnuC), two transmembrane proteins (ZnuB) and a solute-binding protein (ZnuA).

The protein localises to the cell inner membrane. It carries out the reaction Zn(2+)(out) + ATP(in) + H2O(in) = Zn(2+)(in) + ADP(in) + phosphate(in) + H(+)(in). Functionally, part of the ABC transporter complex ZnuABC involved in zinc import. Responsible for energy coupling to the transport system. In Aeromonas hydrophila subsp. hydrophila (strain ATCC 7966 / DSM 30187 / BCRC 13018 / CCUG 14551 / JCM 1027 / KCTC 2358 / NCIMB 9240 / NCTC 8049), this protein is Zinc import ATP-binding protein ZnuC.